We begin with the raw amino-acid sequence, 725 residues long: Phosphatase and actin regulator 4A (725 aa).

A compositionally biased stretch (polar residues) spans 1–12 (MGQGASTQTLNP). The disordered stretch occupies residues 1–597 (MGQGASTQTL…SSTWNNKEQW (597 aa)). The span at 55–64 (KPWKWRKKKT) shows a compositional bias: basic residues. Composition is skewed to basic and acidic residues over residues 65 to 100 (SDKFKETSEGLVLERKMSVRKPREELIERGLLKDIP), 124 to 147 (GDRKSDSGSEIDQDRRMDDTGERK), and 155 to 164 (KRNDGTERMT). An RPEL 1 repeat occupies 75–100 (LVLERKMSVRKPREELIERGLLKDIP). Residues 166–177 (MIQSFQKMSLMQ) are compositionally biased toward polar residues. Residues 212-221 (VIAAPSSAEP) show a composition bias toward low complexity. Residues 222-235 (APVPPPPIAKPPPR) show a composition bias toward pro residues. 2 stretches are compositionally biased toward low complexity: residues 265-276 (PAHTTPATVSTH) and 292-313 (PAHVTTPAAPAHSNPPAVLLKQ). A compositionally biased stretch (polar residues) spans 359–368 (TPVTKRNSGD). Residues 374-384 (PEPPPPAPTSV) show a composition bias toward pro residues. A compositionally biased stretch (low complexity) spans 385 to 401 (PIPAAAPISAPPSTQSD). The span at 402–417 (PPSPTTEPPSQPPPLP) shows a compositional bias: pro residues. Over residues 497–510 (QKPELEPRSRRGLV) the composition is skewed to basic and acidic residues. Composition is skewed to acidic residues over residues 522 to 536 (AGSESSEEEEDESDS) and 545 to 554 (DNEEDDDEED). Residues 567-585 (KDTLALKLERQQEKEKSQE) show a composition bias toward basic and acidic residues. RPEL repeat units follow at residues 606–631 (TALTRRLSQRPTAQELEQRNILLAKN) and 644–669 (RRLTRKLSQRPTIADLQARKILRFHE).

This sequence belongs to the phosphatase and actin regulator family. As to quaternary structure, binds ppp1ca and actin.

It localises to the cytoplasm. The protein resides in the cell projection. It is found in the lamellipodium. In terms of biological role, regulator of protein phosphatase 1 (PP1) required for neural tube and optic fissure closure, and enteric neural crest cell (ENCCs) migration during development. Acts as an activator of PP1. During neural tube closure, localizes to the ventral neural tube and activates PP1, leading to down-regulate cell proliferation within cranial neural tissue and the neural retina. Also acts as a regulator of migration of enteric neural crest cells (ENCCs) by activating PP1, leading to repression of the integrin signaling through the rho/rock pathway. The chain is Phosphatase and actin regulator 4A (phactr4a) from Danio rerio (Zebrafish).